The following is a 635-amino-acid chain: Histone-lysine N-methyltransferase Su(var)3-9 (635 aa).

A binds to Su(var)205 and Suvar(3)7 region spans residues 81–188 (ERLSEKKIKN…LNGFAKLKRR (108 aa)). 2 disordered regions span residues 123-161 (RLCT…NSSG) and 191-210 (SCVG…MGVI). Composition is skewed to low complexity over residues 128–139 (PASSSMPASTSS) and 147–161 (RSTS…NSSG). The Chromo domain maps to 219–278 (YVVERIECVEMDQYQPVFFVKWLGYHDSENTWESLANVADCAEMEKFVERHQQLYETYIA). Positions 410–474 (VGCKCTEDTE…SCSNRLVQHG (65 aa)) constitute a Pre-SET domain. Zn(2+)-binding residues include Cys-412, Cys-414, Cys-421, Cys-427, Cys-428, Cys-456, Cys-460, Cys-462, and Cys-466. One can recognise an SET domain in the interval 477 to 603 (VPLVLFKTAN…AGEELSFDYI (127 aa)). Residues 488–490 (SGW), Tyr-531, and 560–561 (NH) each bind S-adenosyl-L-methionine. Zn(2+)-binding residues include Cys-563, Cys-623, Cys-625, and Cys-630. Residues 619-635 (VRVECRCGRDNCRKVLF) enclose the Post-SET domain.

Belongs to the class V-like SAM-binding methyltransferase superfamily. Histone-lysine methyltransferase family. Suvar3-9 subfamily. As to quaternary structure, interacts with Su(var)205 and Su(var)3-7. Probably associates with HDAC1/Rpd3. Interacts with Rrp6; the interaction promotes association of Rrp6 with a subset of genomic loci.

The protein resides in the nucleus. It localises to the chromosome. Its subcellular location is the centromere. It catalyses the reaction L-lysyl(9)-[histone H3] + 3 S-adenosyl-L-methionine = N(6),N(6),N(6)-trimethyl-L-lysyl(9)-[histone H3] + 3 S-adenosyl-L-homocysteine + 3 H(+). In terms of biological role, histone methyltransferase that specifically trimethylates 'Lys-9' of histone H3 using monomethylated H3 'Lys-9' as substrate. H3 'Lys-9' trimethylation represents a specific tag for epigenetic transcriptional repression by recruiting Su(var)205/HP1 to methylated histones. Mainly functions in heterochromatin regions, thereby playing a central role in the establishment of constitutive heterochromatin at pericentric regions. Involved in heterochromatic gene silencing including the modification of position-effect-variegation. The polypeptide is Histone-lysine N-methyltransferase Su(var)3-9 (Su(var)3-9) (Drosophila melanogaster (Fruit fly)).